The sequence spans 21 residues: Magainin-B1 (21 aa).

Expressed by the skin glands.

The protein resides in the secreted. Has no antimicrobial activity against tested bacteria. This is Magainin-B1 from Xenopus borealis (Kenyan clawed frog).